Reading from the N-terminus, the 524-residue chain is Phosphoenolpyruvate carboxykinase (ATP) (524 aa).

Positions 52, 188, and 194 each coordinate substrate. ATP contacts are provided by residues K194, H213, and G229–T237. Residues K194 and H213 each contribute to the Mn(2+) site. D250 contacts Mn(2+). 3 residues coordinate ATP: E278, R314, and T439. R314 lines the substrate pocket.

It belongs to the phosphoenolpyruvate carboxykinase (ATP) family. The cofactor is Mn(2+).

The protein localises to the cytoplasm. The catalysed reaction is oxaloacetate + ATP = phosphoenolpyruvate + ADP + CO2. The protein operates within carbohydrate biosynthesis; gluconeogenesis. Its function is as follows. Involved in the gluconeogenesis. Catalyzes the conversion of oxaloacetate (OAA) to phosphoenolpyruvate (PEP) through direct phosphoryl transfer between the nucleoside triphosphate and OAA. The sequence is that of Phosphoenolpyruvate carboxykinase (ATP) from Campylobacter jejuni subsp. jejuni serotype O:23/36 (strain 81-176).